The sequence spans 1555 residues: Bromodomain adjacent to zinc finger domain protein 1A (1555 aa).

Residues 1 to 128 are required for association with the CHRAC1/POLE3 complex; sequence MPLLHRKPFV…EETVEVIRNN (128 aa). A required for interaction with the CHRAC1-POLE3 heterodimer. Required for interaction with the CHRAC1-POLE3 heterodimer region spans residues 1-128; it reads MPLLHRKPFV…EETVEVIRNN (128 aa). The segment at 1-133 is required for interaction with NCOR1; sequence MPLLHRKPFV…VIRNNGTRLQ (133 aa). Residues 22–128 enclose the WAC domain; that stretch reads EEVFYCKVTN…EETVEVIRNN (107 aa). Ser270 and Ser284 each carry phosphoserine. Residues 422–488 enclose the DDT domain; that stretch reads PEVFGDALMV…LTAIFQAMAE (67 aa). The stretch at 635–701 forms a coiled coil; the sequence is IEDYVDVLRQ…EDEQRNSAAV (67 aa). Basic and acidic residues-rich tracts occupy residues 652-664 and 671-696; these read LKAE…REAT and RKEE…DEQR. Positions 652–751 are disordered; it reads LKAEQHRKER…KRSRRGKVGQ (100 aa). The interaction with SMARCA5 stretch occupies residues 668-935; that stretch reads IRRRKEEKLK…QEKSRICAQL (268 aa). Positions 668–935 are required for interaction with SMARCA5 and formation of the CHRAC ISWI chromatin remodeling complex; sequence IRRRKEEKLK…QEKSRICAQL (268 aa). 2 stretches are compositionally biased toward acidic residues: residues 705 to 714 and 728 to 737; these read GEEEREDFDT and PDVVTEDEDD. Thr732 carries the phosphothreonine modification. Residues 773–798 are a coiled coil; it reads SADAEEALRQEQQQKEKELLDKIQSA. 2 disordered regions span residues 843-874 and 944-969; these read PSSF…SSLD and HFSD…CDIS. Low complexity predominate over residues 864–873; sequence SFLSESTSSL. Lys954 is covalently cross-linked (Glycyl lysine isopeptide (Lys-Gly) (interchain with G-Cter in SUMO2)). Residues Ser962 and Ser963 each carry the phosphoserine modification. The segment at 1149-1199 adopts a PHD-type zinc-finger fold; it reads NARCKICRKKGDAENMVLCDGCDRGHHTYCVRPKLKAVPDGDWFCPECRPK. The disordered stretch occupies residues 1203–1429; the sequence is RRLSSRQRPS…LNRRSSGRQG (227 aa). Residues 1214–1258 are compositionally biased toward acidic residues; sequence ESDEEMEEGMEDDDDEVDDDDEEGQSEEEEYEVEQDEEDSDDDEA. The segment covering 1263-1277 has biased composition (basic residues); that stretch reads KRGRPQVRLPIKTKG. Residue Ser1282 is modified to Phosphoserine. The segment covering 1297–1313 has biased composition (polar residues); the sequence is SRSQQSTPKNTAKSASK. A phosphoserine mark is found at Ser1320, Ser1339, Ser1352, Ser1370, Ser1401, Ser1412, and Ser1416. The segment covering 1369-1386 has biased composition (polar residues); it reads HSPSFTNFRVSTSRSSRQ. Residues 1429–1532 enclose the Bromo domain; it reads GGVHELSAFE…AFFHIQAQKL (104 aa). Thr1546 is modified (phosphothreonine).

It belongs to the WAL family. Component of the ACF-1 ISWI chromatin remodeling complex at least composed of SMARCA1 and BAZ1A, which regulates the spacing of histone octamers on the DNA template to facilitate access to DNA. Within the ACF-1 ISWI chromatin remodeling complex interacts with SMARCA1; the interaction is direct. Component of the ACF-5 ISWI chromatin remodeling complex (also called the ACF complex) at least composed of BAZ1A and SMARCA5/SNF2H, which regulates the spacing of histone octamers on the DNA template to facilitate access to DNA. Within the ACF-5 ISWI chromatin remodeling complex interacts with SMARCA5/SNF2H; the interaction is direct. Component of the CHRAC ISWI chromatin remodeling complex at least composed of SMARCA5/SNF2H, BAZ1A/ACF1, CHRAC1 and POLE3; the complex preferentially binds DNA through the CHRAC1-POLE3 heterodimer and possesses ATP-dependent nucleosome-remodeling activity. Within the complex interacts (via N-terminus) with POLE3-CHRAC1 heterodimer; the interaction is direct and is required for the complex to preferentially bind to DNA. Within the complex interacts with SMARCA5/SNF2H; the interaction is direct and promotes the interaction with the POLE3-CHRAC1 heterodimer. Interacts with NCOR1 (via its RD1 domain); the interaction corepresses a number of NCOR1-regulated genes.

It localises to the nucleus. Regulatory subunit of the ATP-dependent ACF-1 and ACF-5 ISWI chromatin remodeling complexes, which form ordered nucleosome arrays on chromatin and slide edge- and center-positioned histone octamers away from their original location on the DNA template to facilitate access to DNA during DNA-templated processes such as DNA replication, transcription, and repair. Both complexes regulate the spacing of nucleosomes along the chromatin and have the ability to slide mononucleosomes to the center of a DNA template in an ATP-dependent manner. The ACF-1 ISWI chromatin remodeling complex has a lower ATP hydrolysis rate than the ACF-5 ISWI chromatin remodeling complex. Has a role in sensing the length of DNA which flank nucleosomes, which modulates the nucleosome spacing activity of the ACF-5 ISWI chromatin remodeling complex. Involved in DNA replication and together with SMARCA5/SNF2H is required for replication of pericentric heterochromatin in S-phase. May have a role in nuclear receptor-mediated transcription repression. The polypeptide is Bromodomain adjacent to zinc finger domain protein 1A (Baz1a) (Mus musculus (Mouse)).